The chain runs to 414 residues: WD repeat-containing protein jip5 (414 aa).

5 WD repeats span residues 9–48, 73–112, 118–159, 222–263, and 319–356; these read PLSADLFSQALHPKEPIVSVGLSTGHVQTFRLPSEESDTD, RHKGSCRCLGFGVDGEMLYSAGTDGLVKAAKAETGVVENK, AKDG…SPVS, VSSV…DQDE, and DETEGVIGLGFDVEGRMVSGGGQVVKVWHEAVDSDGMD. Positions 39 to 65 are disordered; sequence RLPSEESDTDGDGAESTSSSRNGKGHI. Positions 352–414 are disordered; the sequence is SDGMDGDMAG…QDIMGFADID (63 aa). Residues 369 to 383 are compositionally biased toward acidic residues; sequence DSDDSDDGDDSDDSD.

The protein belongs to the WD repeat WDR55 family.

The protein resides in the nucleus. Its subcellular location is the nucleolus. The polypeptide is WD repeat-containing protein jip5 (jip5) (Neosartorya fischeri (strain ATCC 1020 / DSM 3700 / CBS 544.65 / FGSC A1164 / JCM 1740 / NRRL 181 / WB 181) (Aspergillus fischerianus)).